The sequence spans 204 residues: Glycerol-3-phosphate acyltransferase (204 aa).

The next 5 helical transmembrane spans lie at 8 to 28 (ILIF…CYIF), 53 to 73 (VPAA…VVIA), 81 to 101 (FITA…IFFG), 116 to 136 (FGFS…VAII), and 155 to 175 (VIFT…IIIL).

The protein belongs to the PlsY family. Probably interacts with PlsX.

It localises to the cell inner membrane. It carries out the reaction an acyl phosphate + sn-glycerol 3-phosphate = a 1-acyl-sn-glycero-3-phosphate + phosphate. It functions in the pathway lipid metabolism; phospholipid metabolism. Catalyzes the transfer of an acyl group from acyl-phosphate (acyl-PO(4)) to glycerol-3-phosphate (G3P) to form lysophosphatidic acid (LPA). This enzyme utilizes acyl-phosphate as fatty acyl donor, but not acyl-CoA or acyl-ACP. The polypeptide is Glycerol-3-phosphate acyltransferase (Francisella tularensis subsp. holarctica (strain FTNF002-00 / FTA)).